The sequence spans 337 residues: Cytoskeleton protein RodZ (337 aa).

Residues 1–111 are Cytoplasmic-facing; it reads MNTEATHDQN…LGKRRKKRDG (111 aa). The region spanning 19–71 is the HTH cro/C1-type domain; the sequence is LRNAREQLGLSQQAVAERLCLKVSTVRDIEEDKAPADLASTFLRGYIRSYARL. Positions 30–49 form a DNA-binding region, H-T-H motif; it reads QQAVAERLCLKVSTVRDIEE. Residues 112–132 traverse the membrane as a helical; Signal-anchor for type II membrane protein segment; it reads WLMTFTWLVLFVVIGLSGAWW. The Periplasmic segment spans residues 133–337; the sequence is WQDRKAQQEE…TLNAEQSPAQ (205 aa). Polar residues predominate over residues 144-167; that stretch reads TTMADQSSAELSSNSEQGQSVPLN. Residues 144 to 235 are disordered; it reads TTMADQSSAE…PTAATTPDGA (92 aa). Residues 168 to 207 are compositionally biased toward low complexity; sequence TSTTTDPATTSTPPASVDTTATNTQTPAVTAPAPAVDPQQ. Residues 208–218 show a composition bias toward polar residues; it reads NAVVSPSQANV. Residues 219–235 show a composition bias toward low complexity; sequence DTAATPAPTAATTPDGA.

It belongs to the RodZ family.

The protein localises to the cell inner membrane. In terms of biological role, cytoskeletal protein that is involved in cell-shape control through regulation of the length of the long axis. The protein is Cytoskeleton protein RodZ of Escherichia coli (strain K12 / MC4100 / BW2952).